The primary structure comprises 453 residues: Omega-3 fatty acid desaturase, chloroplastic (453 aa).

A Histidine box-1 motif is present at residues 171 to 175; sequence HDCGH. The short motif at 207 to 211 is the Histidine box-2 element; the sequence is HRTHH. A Histidine box-3 motif is present at residues 374 to 378; sequence HVIHH.

It belongs to the fatty acid desaturase type 1 family.

It is found in the plastid. It localises to the chloroplast membrane. The protein operates within lipid metabolism; polyunsaturated fatty acid biosynthesis. Functionally, chloroplast omega-3 fatty acid desaturase introduces the third double bond in the biosynthesis of 16:3 and 18:3 fatty acids, important constituents of plant membranes. It is thought to use ferredoxin as an electron donor and to act on fatty acids esterified to galactolipids, sulfolipids and phosphatidylglycerol. The sequence is that of Omega-3 fatty acid desaturase, chloroplastic (FAD7) from Glycine max (Soybean).